The primary structure comprises 88 residues: UPF0297 protein SGO_2042 (88 aa).

The protein belongs to the UPF0297 family.

This is UPF0297 protein SGO_2042 from Streptococcus gordonii (strain Challis / ATCC 35105 / BCRC 15272 / CH1 / DL1 / V288).